The sequence spans 396 residues: Stearoyl-[acyl-carrier-protein] 9-desaturase, chloroplastic (396 aa).

A chloroplast-targeting transit peptide spans 1 to 32; the sequence is MALKLNPVTTFPSTRSLNNFSSRSPRTFLMAA. Residues Glu138, Glu176, His179, Glu229, Glu262, and His265 each contribute to the Fe cation site.

Belongs to the fatty acid desaturase type 2 family. Homodimer. The cofactor is Fe(2+).

The protein resides in the plastid. It localises to the chloroplast. It catalyses the reaction octadecanoyl-[ACP] + 2 reduced [2Fe-2S]-[ferredoxin] + O2 + 2 H(+) = (9Z)-octadecenoyl-[ACP] + 2 oxidized [2Fe-2S]-[ferredoxin] + 2 H2O. It functions in the pathway lipid metabolism; fatty acid metabolism. Converts stearoyl-ACP to oleoyl-ACP by introduction of a cis double bond between carbons 9 and 10 of the acyl chain. The protein is Stearoyl-[acyl-carrier-protein] 9-desaturase, chloroplastic of Linum usitatissimum (Flax).